The chain runs to 206 residues: Putative NAD(P)H nitroreductase MhqN (206 aa).

Residues 11–13, 68–70, 157–158, R193, and R196 contribute to the FMN site; these read RRS, QYK, and IG.

This sequence belongs to the nitroreductase family. Homodimer. FMN serves as cofactor.

It localises to the cytoplasm. Its function is as follows. Putative nitroreductase that may contribute to the degradation of aromatic compounds. This chain is Putative NAD(P)H nitroreductase MhqN (mhqN), found in Bacillus subtilis (strain 168).